Here is a 215-residue protein sequence, read N- to C-terminus: MLTKAEALAHTVIYRKNSRFDKVKEKSEELTLIGKGRSAYVFALTEGGRKMALKVFFPEYQATAVKEAAIYEKLAGSAFYPDIYETGDSFILMEYIKGETFYNCLKKGIAISDDMIQQVEEALSDARAAGLNPSDIHLRNLILTETGAVRVIDVARFEQTKTCTQWDDLKSAYHALYKKPIFPKKIPGFWLEIIAFLYKKDWFQKHFAQRKRKYS.

In terms of domain architecture, Protein kinase spans 27–215 (SEELTLIGKG…HFAQRKRKYS (189 aa)). Residues 33 to 41 (IGKGRSAYV) and lysine 54 each bind ATP. Aspartate 135 serves as the catalytic Proton acceptor.

Belongs to the protein kinase superfamily. Ser/Thr protein kinase family.

It catalyses the reaction L-seryl-[protein] + ATP = O-phospho-L-seryl-[protein] + ADP + H(+). The enzyme catalyses L-threonyl-[protein] + ATP = O-phospho-L-threonyl-[protein] + ADP + H(+). In Bacillus subtilis (strain 168), this protein is Putative serine/threonine-protein kinase YrzF (yrzF).